The chain runs to 162 residues: Transcription elongation factor GreA (162 aa).

Residues 45–65 are a coiled coil; it reads NAEYHAAKERQLFIEARINEL.

It belongs to the GreA/GreB family.

Functionally, necessary for efficient RNA polymerase transcription elongation past template-encoded arresting sites. The arresting sites in DNA have the property of trapping a certain fraction of elongating RNA polymerases that pass through, resulting in locked ternary complexes. Cleavage of the nascent transcript by cleavage factors such as GreA or GreB allows the resumption of elongation from the new 3'terminus. GreA releases sequences of 2 to 3 nucleotides. This chain is Transcription elongation factor GreA, found in Wolinella succinogenes (strain ATCC 29543 / DSM 1740 / CCUG 13145 / JCM 31913 / LMG 7466 / NCTC 11488 / FDC 602W) (Vibrio succinogenes).